Reading from the N-terminus, the 454-residue chain is Bifunctional protein GlmU (454 aa).

The segment at 1 to 231 (MDRATVSLIV…EAETLGVNTR (231 aa)) is pyrophosphorylase. Residues 11–14 (LAAG), Lys-25, Gln-78, 83–84 (GT), 106–108 (YGD), Gly-143, Glu-157, Asn-172, and Asn-229 contribute to the UDP-N-acetyl-alpha-D-glucosamine site. Asp-108 contributes to the Mg(2+) binding site. Asn-229 serves as a coordination point for Mg(2+). The tract at residues 232-252 (AQLAEAEAEFQKRARAAALED) is linker. Positions 253-454 (GVTLTAPDTV…AKAAKKKEAP (202 aa)) are N-acetyltransferase. Arg-318 and Lys-336 together coordinate UDP-N-acetyl-alpha-D-glucosamine. Residue His-348 is the Proton acceptor of the active site. UDP-N-acetyl-alpha-D-glucosamine is bound by residues Tyr-351 and Asn-362. Residues Ala-365, 371–372 (NY), Ser-390, Ser-408, and Arg-425 contribute to the acetyl-CoA site.

The protein in the N-terminal section; belongs to the N-acetylglucosamine-1-phosphate uridyltransferase family. This sequence in the C-terminal section; belongs to the transferase hexapeptide repeat family. Homotrimer. Mg(2+) is required as a cofactor.

Its subcellular location is the cytoplasm. The catalysed reaction is alpha-D-glucosamine 1-phosphate + acetyl-CoA = N-acetyl-alpha-D-glucosamine 1-phosphate + CoA + H(+). The enzyme catalyses N-acetyl-alpha-D-glucosamine 1-phosphate + UTP + H(+) = UDP-N-acetyl-alpha-D-glucosamine + diphosphate. It functions in the pathway nucleotide-sugar biosynthesis; UDP-N-acetyl-alpha-D-glucosamine biosynthesis; N-acetyl-alpha-D-glucosamine 1-phosphate from alpha-D-glucosamine 6-phosphate (route II): step 2/2. It participates in nucleotide-sugar biosynthesis; UDP-N-acetyl-alpha-D-glucosamine biosynthesis; UDP-N-acetyl-alpha-D-glucosamine from N-acetyl-alpha-D-glucosamine 1-phosphate: step 1/1. Its pathway is bacterial outer membrane biogenesis; LPS lipid A biosynthesis. Catalyzes the last two sequential reactions in the de novo biosynthetic pathway for UDP-N-acetylglucosamine (UDP-GlcNAc). The C-terminal domain catalyzes the transfer of acetyl group from acetyl coenzyme A to glucosamine-1-phosphate (GlcN-1-P) to produce N-acetylglucosamine-1-phosphate (GlcNAc-1-P), which is converted into UDP-GlcNAc by the transfer of uridine 5-monophosphate (from uridine 5-triphosphate), a reaction catalyzed by the N-terminal domain. In Cereibacter sphaeroides (strain ATCC 17023 / DSM 158 / JCM 6121 / CCUG 31486 / LMG 2827 / NBRC 12203 / NCIMB 8253 / ATH 2.4.1.) (Rhodobacter sphaeroides), this protein is Bifunctional protein GlmU.